A 963-amino-acid chain; its full sequence is Phosphofurin acidic cluster sorting protein 1 (963 aa).

The segment covering 1-22 has biased composition (gly residues); it reads MAERGGAGGGPGGAGGGSGQRG. Disordered regions lie at residues 1 to 72 and 78 to 97; these read MAER…SSST and VAVASGSAPPGGPGPGRTPA. Ala2 carries the post-translational modification N-acetylalanine. At Ser28 the chain carries Phosphoserine. The residue at position 46 (Thr46) is a Phosphothreonine. Over residues 53–72 the composition is skewed to low complexity; it reads ATSSSSSTSAAAASSSSSST. An involved in binding to AP-1 region spans residues 168-175; that stretch reads ETELQLTF. Tyr251 carries the post-translational modification Phosphotyrosine. Over residues 262–273 the composition is skewed to basic and acidic residues; it reads GIKSKLSDRSPD. 2 disordered regions span residues 262-299 and 377-428; these read GIKSKLSDRSPDIDNYSEEEEESFSSEQEGSDDPLHGQ and NPSD…GKDT. Residues 276–293 show a composition bias toward acidic residues; sequence NYSEEEEESFSSEQEGSD. Positions 353-377 form a coiled coil; that stretch reads HVSREQIREVEEDLDELYDSLEMYN. Phosphoserine is present on residues Ser379 and Ser381. Residues 406–428 are compositionally biased toward polar residues; that stretch reads MSQSSSQTEIGSLNSKGSLGKDT. Phosphoserine is present on residues Ser430 and Ser495. Disordered stretches follow at residues 476–542 and 760–804; these read PEKV…HSTQ and SPST…SMSS. Polar residues predominate over residues 483–496; it reads MKSSKTDLQGSASP. Position 504 is a phosphothreonine (Thr504). Residues Ser519, Ser528, Ser529, Ser531, and Ser534 each carry the phosphoserine modification. A compositionally biased stretch (low complexity) spans 770-804; that stretch reads SPVVSLTVPSTSPPSSSGLSRDATATPPSSPSMSS.

It belongs to the PACS family. Associates with AP-1 and AP-3 but not with AP-2 complexes. Interacts with FURIN. Forms a ternary complex with FURIN and AP-1. Interacts with NPHP1; the interaction is dependent of NPHP1 phosphorylation by CK2. Interacts with PKD2 (via acidic region). Interacts with SORL1. Interacts with WDR37. As to quaternary structure, (Microbial infection) Interacts with HIV-1 Nef. In terms of assembly, (Microbial infection) Interacts with Epstein-barr virus protein BBLF1.

It is found in the golgi apparatus. The protein localises to the trans-Golgi network. In terms of biological role, coat protein that is involved in the localization of trans-Golgi network (TGN) membrane proteins that contain acidic cluster sorting motifs. Controls the endosome-to-Golgi trafficking of furin and mannose-6-phosphate receptor by connecting the acidic-cluster-containing cytoplasmic domain of these molecules with the adapter-protein complex-1 (AP-1) of endosomal clathrin-coated membrane pits. Involved in HIV-1 nef-mediated removal of MHC-I from the cell surface to the TGN. Required for normal ER Ca2+ handling in lymphocytes. Together with WDR37, it plays an essential role in lymphocyte development, quiescence and survival. Required for stabilizing peripheral lymphocyte populations. The sequence is that of Phosphofurin acidic cluster sorting protein 1 (PACS1) from Homo sapiens (Human).